We begin with the raw amino-acid sequence, 316 residues long: Peroxidase 67 (316 aa).

The N-terminal stretch at 1-19 (MLKVVLLMMIMMLASQSEA) is a signal peptide. Position 20 is a pyrrolidone carboxylic acid (Q20). 4 disulfides stabilise this stretch: C30–C110, C63–C68, C116–C312, and C196–C221. H61 acts as the Proton acceptor in catalysis. Ca(2+)-binding residues include D62, V65, G67, D69, and S71. P159 lines the substrate pocket. H189 contacts heme b. A Ca(2+)-binding site is contributed by T190. N-linked (GlcNAc...) asparagine glycosylation occurs at N205. Ca(2+)-binding residues include D236, S239, and D244.

The protein belongs to the peroxidase family. Classical plant (class III) peroxidase subfamily. Requires heme b as cofactor. The cofactor is Ca(2+).

The protein localises to the secreted. The catalysed reaction is 2 a phenolic donor + H2O2 = 2 a phenolic radical donor + 2 H2O. Removal of H(2)O(2), oxidation of toxic reductants, biosynthesis and degradation of lignin, suberization, auxin catabolism, response to environmental stresses such as wounding, pathogen attack and oxidative stress. These functions might be dependent on each isozyme/isoform in each plant tissue. The sequence is that of Peroxidase 67 (PER67) from Arabidopsis thaliana (Mouse-ear cress).